Consider the following 151-residue polypeptide: SsrA-binding protein (151 aa).

This sequence belongs to the SmpB family.

It is found in the cytoplasm. Its function is as follows. Required for rescue of stalled ribosomes mediated by trans-translation. Binds to transfer-messenger RNA (tmRNA), required for stable association of tmRNA with ribosomes. tmRNA and SmpB together mimic tRNA shape, replacing the anticodon stem-loop with SmpB. tmRNA is encoded by the ssrA gene; the 2 termini fold to resemble tRNA(Ala) and it encodes a 'tag peptide', a short internal open reading frame. During trans-translation Ala-aminoacylated tmRNA acts like a tRNA, entering the A-site of stalled ribosomes, displacing the stalled mRNA. The ribosome then switches to translate the ORF on the tmRNA; the nascent peptide is terminated with the 'tag peptide' encoded by the tmRNA and targeted for degradation. The ribosome is freed to recommence translation, which seems to be the essential function of trans-translation. The sequence is that of SsrA-binding protein from Lactobacillus acidophilus (strain ATCC 700396 / NCK56 / N2 / NCFM).